A 385-amino-acid chain; its full sequence is Acetylornithine aminotransferase (385 aa).

Residues 95–96 (GA) and F122 each bind pyridoxal 5'-phosphate. A N(2)-acetyl-L-ornithine-binding site is contributed by R125. 208 to 211 (DEIQ) is a binding site for pyridoxal 5'-phosphate. K237 is subject to N6-(pyridoxal phosphate)lysine. N(2)-acetyl-L-ornithine is bound at residue T265. T266 contributes to the pyridoxal 5'-phosphate binding site.

The protein belongs to the class-III pyridoxal-phosphate-dependent aminotransferase family. ArgD subfamily. In terms of assembly, homodimer. Pyridoxal 5'-phosphate is required as a cofactor.

The protein resides in the cytoplasm. It carries out the reaction N(2)-acetyl-L-ornithine + 2-oxoglutarate = N-acetyl-L-glutamate 5-semialdehyde + L-glutamate. Its pathway is amino-acid biosynthesis; L-arginine biosynthesis; N(2)-acetyl-L-ornithine from L-glutamate: step 4/4. In Bacillus subtilis (strain 168), this protein is Acetylornithine aminotransferase.